The sequence spans 159 residues: MRCPFCEYNGTRVLDSRPFNHNKSIRRRRECEACERRFTTFEMVEETPLLIVKKDGTREEFSRDKILRGLVRACEKRPVPLEVLENVVNDIEKELRSCGQAEIPSNDVGEKVMERLYHVDEVAYVRFASVYRQFKDINVFMKELEELLAQARNSSFPKE.

A zinc finger spans residues 3 to 34 (CPFCEYNGTRVLDSRPFNHNKSIRRRRECEAC). The 91-residue stretch at 49–139 (LLIVKKDGTR…VYRQFKDINV (91 aa)) folds into the ATP-cone domain.

This sequence belongs to the NrdR family. Zn(2+) serves as cofactor.

In terms of biological role, negatively regulates transcription of bacterial ribonucleotide reductase nrd genes and operons by binding to NrdR-boxes. In Brevibacillus brevis (strain 47 / JCM 6285 / NBRC 100599), this protein is Transcriptional repressor NrdR.